The following is a 469-amino-acid chain: Glutamine synthetase (469 aa).

One can recognise a GS beta-grasp domain in the interval glutamate 15–threonine 96. The GS catalytic domain maps to proline 104–valine 469. The Mg(2+) site is built by glutamate 129 and glutamate 131. Residue glutamate 205 participates in ATP binding. The Mg(2+) site is built by glutamate 210 and glutamate 218. Tyrosine 221 to phenylalanine 223 provides a ligand contact to ATP. L-glutamate is bound by residues asparagine 262–glycine 263 and glycine 263. Mg(2+) is bound at residue histidine 267. ATP is bound by residues histidine 269–serine 271 and serine 271. L-glutamate-binding residues include arginine 320, glutamate 326, and arginine 338. Residues arginine 338, arginine 343, and lysine 352 each coordinate ATP. Glutamate 357 serves as a coordination point for Mg(2+). Arginine 359 provides a ligand contact to L-glutamate. Position 397 is an O-AMP-tyrosine (tyrosine 397).

This sequence belongs to the glutamine synthetase family. Oligomer of 12 subunits arranged in the form of two hexagons. Mg(2+) is required as a cofactor.

The protein resides in the cytoplasm. It catalyses the reaction L-glutamate + NH4(+) + ATP = L-glutamine + ADP + phosphate + H(+). Its activity is regulated as follows. The activity of this enzyme could be controlled by adenylation under conditions of abundant glutamine. Catalyzes the ATP-dependent biosynthesis of glutamine from glutamate and ammonia. Complements L-glutamine auxotrophy of an E.coli glnA mutant. This Streptomyces coelicolor (strain ATCC BAA-471 / A3(2) / M145) protein is Glutamine synthetase.